The following is a 143-amino-acid chain: Holo-[acyl-carrier-protein] synthase (143 aa).

Mg(2+) is bound by residues Asp-9 and Glu-63.

The protein belongs to the P-Pant transferase superfamily. AcpS family. Mg(2+) is required as a cofactor.

The protein localises to the cytoplasm. It carries out the reaction apo-[ACP] + CoA = holo-[ACP] + adenosine 3',5'-bisphosphate + H(+). Its function is as follows. Transfers the 4'-phosphopantetheine moiety from coenzyme A to a Ser of acyl-carrier-protein. The protein is Holo-[acyl-carrier-protein] synthase of Burkholderia pseudomallei (strain 668).